The following is a 545-amino-acid chain: T-box transcription factor TBX4 (545 aa).

The segment at residues Leu71–Gly251 is a DNA-binding region (T-box). The tract at residues Gln479–His509 is disordered. Basic and acidic residues predominate over residues Val482–Pro505. Ser507 carries the phosphoserine modification.

It localises to the nucleus. In terms of biological role, transcriptional regulator that has an essential role in the organogenesis of lungs, pelvis, and hindlimbs. This is T-box transcription factor TBX4 (TBX4) from Homo sapiens (Human).